A 132-amino-acid polypeptide reads, in one-letter code: Small ribosomal subunit protein uS8 (132 aa).

Belongs to the universal ribosomal protein uS8 family. In terms of assembly, part of the 30S ribosomal subunit. Contacts proteins S5 and S12.

Its function is as follows. One of the primary rRNA binding proteins, it binds directly to 16S rRNA central domain where it helps coordinate assembly of the platform of the 30S subunit. The sequence is that of Small ribosomal subunit protein uS8 from Borrelia turicatae (strain 91E135).